A 354-amino-acid chain; its full sequence is Fructose-1,6-bisphosphatase class 1 (354 aa).

Residues glutamate 112, aspartate 134, leucine 136, and aspartate 137 each contribute to the Mg(2+) site. Substrate is bound by residues 137 to 140, asparagine 229, tyrosine 257, and lysine 287; that span reads DGSS. Mg(2+) is bound at residue glutamate 293.

It belongs to the FBPase class 1 family. As to quaternary structure, homotetramer. Mg(2+) serves as cofactor.

The protein localises to the cytoplasm. It catalyses the reaction beta-D-fructose 1,6-bisphosphate + H2O = beta-D-fructose 6-phosphate + phosphate. The protein operates within carbohydrate biosynthesis; Calvin cycle. This Trichodesmium erythraeum (strain IMS101) protein is Fructose-1,6-bisphosphatase class 1.